Here is a 2073-residue protein sequence, read N- to C-terminus: MVKLANPLYTEWILEAIQKIKKQKQRPSEERICHAVSTSHGLDKKTVSEQLELSVQDGSVLKVTNKGLASYKDPDNPGRFSSVKPGTFPKSAKGSRGSCNDLRNVDWNKLLRRAIEGLEEPNGSSLKNIEKYLRSQSDLTSTTNNPAFQQRLRLGAKRAVNNGRLLKDGPQYRVNYGSLDGKGAPQYPSAFPSSLPPVSLLPHEKDQPRADPIPICSFCLGTKESNREKKPEELLSCADCGSSGHPSCLKFCPELTTNVKALRWQCIECKTCSACRVQGRNADNMLFCDSCDRGFHMECCDPPLSRMPKGMWICQVCRPKKKGRKLLHEKAAQIKRRYAKPIGRPKNKLKQRLLSVTSDEGSMNAFTGRGSPGRGQKTKVCTTPSSGHAASGKDSSSRLAVTDPTRPGATTKITTTSTYISASTLKVNKKTKGLIDGLTKFFTPSPDGRRSRGEIIDFSKHYRPRKKVSQKQSCTSHVLATGTTQKLKPPPSSLPPPTPISGQSPSSQKSSTATSSPSPQSSSSQCSVPSLSSLTTNSQLKALFDGLSHIYTTQGQSRKKGHPSYAPPKRMRRKTELSSTAKSKAHFFGKRDIRSRFISHSSSSSWGMARGSIFKAIAHFKRTTFLKKHRMLGRLKYKVTPQMGTPSPGKGSLTDGRIKPDQDDDTEIKINIKQESADVNVIGNKDVVTEEDLDVFKQAQELSWEKIECESGVEDCGRYPSVIEFGKYEIQTWYSSPYPQEYARLPKLYLCEFCLKYMKSKNILLRHSKKCGWFHPPANEIYRRKDLSVFEVDGNMSKIYCQNLCLLAKLFLDHKTLYYDVEPFLFYVLTKNDEKGCHLVGYFSKEKLCQQKYNVSCIMIMPQHQRQGFGRFLIDFSYLLSRREGQAGSPEKPLSDLGRLSYLAYWKSVILEYLYHHHERHISIKAISRATGMCPHDIATTLQHLHMIDKRDGRFVIIRREKLILSHMEKLKTCSRANELDPDSLRWTPILISNAAVSEEEREAEKEAERLMEQASCWEKEEQEILSTRANSRQSPAKVQSKNKYLHSPESRPVTGERGQLLELSKESSEEEEEEEDEEEEEEEEEEEEDEEEEEEEEEEEEEENIQSSPPRLTKPQSVAIKRKRPFVLKKKRGRKRRRINSSVTTETISETTEVLNEPFDNSDEERPMPQLEPTCEIEVEEDGRKPVLRKAFQHQPGKKRQTEEEEGKDNHCFKNADPCRNNMNDDSSNLKEGSKDNPEPLKCKQVWPKGTKRGLSKWRQNKERKTGFKLNLYTPPETPMEPDEQVTVEEQKETSEGKTSPSPIRIEEEVKETGEALLPQEENRREETCAPVSPNTSPGEKPEDDLIKPEEEEEEEEEEEEEEEEEEGEEEEGGGNVEKDPDGAKSQEKEEPEISTEKEDSARLDDHEEEEEEDEEPSHNEDHDADDEDDSHMESAEVEKEELPRESFKEVLENQETFLDLNVQPGHSNPEVLMDCGVDLTASCNSEPKELAGDPEAVPESDEEPPPGEQAQKQDQKNSKEVDTEFKEGNPATMEIDSETVQAVQSLTQESSEQDDTFQDCAETQEACRSLQNYTRADQSPQIATTLDDCQQSDHSSPVSSVHSHPGQSVRSVNSPSVPALENSYAQISPDQSAISVPSLQNMETSPMMDVPSVSDHSQQVVDSGFSDLGSIESTTENYENPSSYDSTMGGSICGNGSSQNSCSYSNLTSSSLTQSSCAVTQQMSNISGSCSMLQQTSISSPPTCSVKSPQGCVVERPPSSSQQLAQCSMAANFTPPMQLAEIPETSNANIGLYERMGQSDFGAGHYPQPSATFSLAKLQQLTNTLIDHSLPYSHSAAVTSYANSASLSTPLSNTGLVQLSQSPHSVPGGPQAQATMTPPPNLTPPPMNLPPPLLQRNMAASNIGISHSQRLQTQIASKGHISMRTKSASLSPAAATHQSQIYGRSQTVAMQGPARTLTMQRGMNMSVNLMPAPAYNVNSVNMNMNTLNAMNGYSMSQPMMNSGYHSNHGYMNQTPQYPMQMQMGMMGTQPYAQQPMQTPPHGNMMYTAPGHHGYMNTGMSKQSLNGSYMRR.

One can recognise an SAMD1-like winged helix (WH) domain in the interval 1–77 (MVKLANPLYT…LASYKDPDNP (77 aa)). A disordered region spans residues 72–97 (KDPDNPGRFSSVKPGTFPKSAKGSRG). The H15 domain maps to 103–176 (RNVDWNKLLR…KDGPQYRVNY (74 aa)). PHD-type zinc fingers lie at residues 213 to 272 (IPIC…CKTC) and 269 to 320 (CKTC…CRPK). Phosphoserine is present on S355. Disordered regions lie at residues 360-409 (EGSM…RPGA), 442-531 (FTPS…VPSL), 553-583 (TQGQ…TAKS), and 639-663 (VTPQ…PDQD). The segment at 361–717 (GSMNAFTGRG…ECESGVEDCG (357 aa)) is negatively regulates HAT activity. A compositionally biased stretch (polar residues) spans 379-399 (KVCTTPSSGHAASGKDSSSRL). The segment covering 447 to 460 (DGRRSRGEIIDFSK) has biased composition (basic and acidic residues). Residues 470 to 485 (QKQSCTSHVLATGTTQ) show a composition bias toward polar residues. The segment covering 488–499 (KPPPSSLPPPTP) has biased composition (pro residues). Residues 501-531 (SGQSPSSQKSSTATSSPSPQSSSSQCSVPSL) show a composition bias toward low complexity. A Phosphoserine modification is found at S647. A Glycyl lysine isopeptide (Lys-Gly) (interchain with G-Cter in SUMO2) cross-link involves residue K673. The 275-residue stretch at 715–989 (DCGRYPSVIE…LDPDSLRWTP (275 aa)) folds into the MYST-type HAT domain. A catalytic region spans residues 718 to 1008 (RYPSVIEFGK…EEEREAEKEA (291 aa)). The C2HC MYST-type zinc finger occupies 748 to 773 (LYLCEFCLKYMKSKNILLRHSKKCGW). Residues 752 to 1008 (EFCLKYMKSK…EEEREAEKEA (257 aa)) form an interaction with BRPF1 region. The residue at position 815 (K815) is an N6-acetyllysine; by autocatalysis. Residues 856–860 (SCIMI) and 865–871 (QRQGFGR) each bind acetyl-CoA. E891 functions as the Proton donor/acceptor in the catalytic mechanism. S895 provides a ligand contact to acetyl-CoA. 3 disordered regions span residues 1022 to 1452 (EQEI…FKEV), 1484 to 1538 (SCNS…MEID), and 1580 to 1619 (QSPQ…SPSV). Polar residues predominate over residues 1025-1043 (ILSTRANSRQSPAKVQSKN). K1038, K1042, and K1044 each carry N6-acetyllysine. At S1048 the chain carries Phosphoserine. The span at 1069-1105 (SEEEEEEEDEEEEEEEEEEEEDEEEEEEEEEEEEEEN) shows a compositional bias: acidic residues. Residues 1106–1117 (IQSSPPRLTKPQ) show a composition bias toward polar residues. Residues 1121 to 1140 (IKRKRPFVLKKKRGRKRRRI) are compositionally biased toward basic residues. The span at 1142-1155 (SSVTTETISETTEV) shows a compositional bias: low complexity. Over residues 1187-1200 (PVLRKAFQHQPGKK) the composition is skewed to basic residues. Basic and acidic residues-rich tracts occupy residues 1229-1243 (SNLK…EPLK), 1306-1315 (RIEEEVKETG), and 1341-1350 (EKPEDDLIKP). A compositionally biased stretch (acidic residues) spans 1351-1374 (EEEEEEEEEEEEEEEEEEGEEEEG). Composition is skewed to basic and acidic residues over residues 1378-1390 (VEKD…SQEK) and 1396-1407 (STEKEDSARLDD). Acidic residues predominate over residues 1408–1417 (HEEEEEEDEE). Over residues 1433–1452 (HMESAEVEKEELPRESFKEV) the composition is skewed to basic and acidic residues. The span at 1498–1507 (AVPESDEEPP) shows a compositional bias: acidic residues. Over residues 1513 to 1529 (QKQDQKNSKEVDTEFKE) the composition is skewed to basic and acidic residues. Residues 1560–2073 (QDCAETQEAC…QSLNGSYMRR (514 aa)) form an interaction with RUNX1 and RUNX2 region. A compositionally biased stretch (polar residues) spans 1580 to 1591 (QSPQIATTLDDC). Low complexity predominate over residues 1594-1611 (SDHSSPVSSVHSHPGQSV).

This sequence belongs to the MYST (SAS/MOZ) family. In terms of assembly, component of the MOZ/MORF complex composed at least of ING5, KAT6A, KAT6B, MEAF6 and one of BRPF1, BRD1/BRPF2 and BRPF3. Interacts with RUNX1 and RUNX2. In terms of processing, autoacetylated. Autoacetylation at Lys-815 is required for proper function. As to expression, ubiquitously expressed, with high levels in heart, pancreas, testis and ovary.

It localises to the nucleus. It carries out the reaction L-lysyl-[protein] + acetyl-CoA = N(6)-acetyl-L-lysyl-[protein] + CoA + H(+). Its function is as follows. Histone acetyltransferase which may be involved in both positive and negative regulation of transcription. Required for RUNX2-dependent transcriptional activation. May be involved in cerebral cortex development. Component of the MOZ/MORF complex which has a histone H3 acetyltransferase activity. The polypeptide is Histone acetyltransferase KAT6B (KAT6B) (Homo sapiens (Human)).